A 285-amino-acid chain; its full sequence is Putative ankyrin repeat protein R551 (285 aa).

ANK repeat units follow at residues 99–129, 157–186, 188–214, and 215–249; these read DLKS…PIKI, NDFD…LQDE, IGKI…EAFR, and SAPD…CIQQ.

The chain is Putative ankyrin repeat protein R551 from Acanthamoeba polyphaga (Amoeba).